Here is a 343-residue protein sequence, read N- to C-terminus: Cyclin-Y-like protein 1-B (343 aa).

The interval 1–69 (MGNTVTCCVS…ECNPSDHPQA (69 aa)) is disordered. The segment covering 17–28 (AGRDRRVAERGE) has biased composition (basic and acidic residues). One can recognise a Cyclin N-terminal domain in the interval 145 to 267 (DIFDEKLHPL…FLELLQFNIN (123 aa)).

The protein belongs to the cyclin family. Cyclin Y subfamily.

The protein is Cyclin-Y-like protein 1-B (ccnyl1-b) of Xenopus laevis (African clawed frog).